Consider the following 1456-residue polypeptide: CLIP-associating protein 1-B (1456 aa).

HEAT repeat units lie at residues 68–87 (LLGMDILSALVTRLQDRFRT), 88–124 (QIGTVLPSLMDRLGDAKDSVRDQDQNLLIKIMEQASN), and 163–200 (LTLSKIVPHICNLLGDPNSQVRDAAINCLVEIYRHVGE). The segment at 237-296 (TDKNFDDEDSVDGNRPSSASSSASSKAPQTARRGVSLGTGRRPGTSSAAPKTGGTAKEGA) is disordered. Residues 284 to 296 (AAPKTGGTAKEGA) are compositionally biased toward low complexity. An HEAT 4 repeat occupies 442 to 479 (THVPRLIPIITSNCTSKSVAVRRRCYEFLDLLLQEWQT). Disordered stretches follow at residues 547-728 (SIVS…DRFG) and 776-796 (GMYSDDDANSDASSACSERSY). Residues 550–569 (SLPQSDRSSSSSQESLNRPL) show a composition bias toward low complexity. Residues 573–594 (RSPTGSTVSRATSKSTTGSLQR) are compositionally biased toward polar residues. Low complexity-rich tracts occupy residues 603-618 (AAATSKTKAASGASTA), 642-656 (QSSGSTTSTASTPAD), and 665-679 (VVSQSQPGSRSSSPG). Over residues 711–721 (QGCSRETSPSR) the composition is skewed to polar residues. The segment covering 785–796 (SDASSACSERSY) has biased composition (low complexity). The stretch at 930–967 (QQFNILMRFIVDQTQTPNLKVKVAILKYIESLARQMDP) is one HEAT 5 repeat. Disordered regions lie at residues 1037-1080 (LKNS…GLSP) and 1121-1147 (VRRDGKKESEMGSCDAGMASPASDLRG). Over residues 1038-1050 (KNSSNSSMGSPSN) the composition is skewed to low complexity. The segment covering 1062-1074 (SRASPLTSPTNCS) has biased composition (polar residues). Over residues 1121–1130 (VRRDGKKESE) the composition is skewed to basic and acidic residues. HEAT repeat units follow at residues 1260-1297 (EHFKTILLLLLETLGDKDHAIRALALRVLREILRNQPA) and 1378-1415 (QILPDIIPGLLQGYDNTESSVRKASVFCLVAVYSVIGE).

It belongs to the CLASP family. As to quaternary structure, interacts (via C-terminus) with clip1/clip-170, and cenpe.

It localises to the cytoplasm. Its subcellular location is the cytoskeleton. It is found in the microtubule organizing center. The protein resides in the centrosome. The protein localises to the chromosome. It localises to the centromere. Its subcellular location is the kinetochore. It is found in the spindle. The protein resides in the golgi apparatus. The protein localises to the trans-Golgi network. In terms of biological role, microtubule plus-end tracking protein that promotes the stabilization of dynamic microtubules during anaphase. Plays a crucial role in chromatin-induced microtubule formation. May also act at microtubule minus ends. May be involved in the nucleation of noncentrosomal microtubules originating from the trans-Golgi network (TGN). The chain is CLIP-associating protein 1-B from Xenopus laevis (African clawed frog).